The sequence spans 178 residues: Large ribosomal subunit protein uL6 (178 aa).

It belongs to the universal ribosomal protein uL6 family. In terms of assembly, part of the 50S ribosomal subunit.

Functionally, this protein binds to the 23S rRNA, and is important in its secondary structure. It is located near the subunit interface in the base of the L7/L12 stalk, and near the tRNA binding site of the peptidyltransferase center. This Streptococcus uberis (strain ATCC BAA-854 / 0140J) protein is Large ribosomal subunit protein uL6.